A 370-amino-acid polypeptide reads, in one-letter code: 3-dehydroquinate synthase (370 aa).

NAD(+) contacts are provided by residues 108-112, 132-133, Lys145, and Lys154; these read GVIGD and TT. The Zn(2+) site is built by Glu187, His249, and His267.

Belongs to the sugar phosphate cyclases superfamily. Dehydroquinate synthase family. Co(2+) is required as a cofactor. It depends on Zn(2+) as a cofactor. NAD(+) serves as cofactor.

It is found in the cytoplasm. The catalysed reaction is 7-phospho-2-dehydro-3-deoxy-D-arabino-heptonate = 3-dehydroquinate + phosphate. The protein operates within metabolic intermediate biosynthesis; chorismate biosynthesis; chorismate from D-erythrose 4-phosphate and phosphoenolpyruvate: step 2/7. Catalyzes the conversion of 3-deoxy-D-arabino-heptulosonate 7-phosphate (DAHP) to dehydroquinate (DHQ). The chain is 3-dehydroquinate synthase from Cereibacter sphaeroides (strain ATCC 17029 / ATH 2.4.9) (Rhodobacter sphaeroides).